The sequence spans 359 residues: Nicotinate-nucleotide--dimethylbenzimidazole phosphoribosyltransferase (359 aa).

Glu318 functions as the Proton acceptor in the catalytic mechanism.

It belongs to the CobT family. As to quaternary structure, homodimer.

It catalyses the reaction 5,6-dimethylbenzimidazole + nicotinate beta-D-ribonucleotide = alpha-ribazole 5'-phosphate + nicotinate + H(+). It functions in the pathway nucleoside biosynthesis; alpha-ribazole biosynthesis; alpha-ribazole from 5,6-dimethylbenzimidazole: step 1/2. Catalyzes the synthesis of alpha-ribazole-5'-phosphate from nicotinate mononucleotide (NAMN) and 5,6-dimethylbenzimidazole (DMB). This chain is Nicotinate-nucleotide--dimethylbenzimidazole phosphoribosyltransferase, found in Escherichia coli O127:H6 (strain E2348/69 / EPEC).